The following is a 505-amino-acid chain: Cytochrome P450 CYP71D313 (505 aa).

A helical membrane pass occupies residues 1–21 (MELQFPLFSIFFVTILFFFLF). Residue C441 coordinates heme. Residues 442–462 (PGIAFGIATIELPLALLLYHF) traverse the membrane as a helical segment.

This sequence belongs to the cytochrome P450 family. The cofactor is heme.

It localises to the membrane. Functionally, probable heme-thiolate monooxygenase. The chain is Cytochrome P450 CYP71D313 from Panax ginseng (Korean ginseng).